The sequence spans 204 residues: Ribosome maturation factor RimP (204 aa).

Residues 176-204 (GNFDESQFDEIEESEGEEADEAEQPPTKH) are disordered. Over residues 181 to 198 (SQFDEIEESEGEEADEAE) the composition is skewed to acidic residues.

The protein belongs to the RimP family.

It localises to the cytoplasm. Functionally, required for maturation of 30S ribosomal subunits. In Cereibacter sphaeroides (strain KD131 / KCTC 12085) (Rhodobacter sphaeroides), this protein is Ribosome maturation factor RimP.